We begin with the raw amino-acid sequence, 351 residues long: Divinyl chlorophyll a/b light-harvesting protein PcbA (351 aa).

The next 6 membrane-spanning stretches (helical) occupy residues 27-47 (FIAA…AFTL), 64-84 (LIAL…GTFV), 89-109 (VTAI…GGLL), 202-222 (VMGG…FHIA), 242-262 (AILS…AFWC), and 305-325 (LTNV…WHAL).

This sequence belongs to the PsbB/PsbC family. IsiA/Pcb subfamily. The antenna complex consists of divinyl chlorophylls (a and b) and divinyl chlorophyll a/b binding proteins and binds more divinyl chlorophyll b than does the antenna complex from high-light-adapted Prochlorococcus. It depends on divinyl chlorophyll a as a cofactor. Divinyl chlorophyll b is required as a cofactor.

It localises to the cellular thylakoid membrane. Its function is as follows. The antenna complex functions as a light receptor, it captures and delivers excitation energy to photosystems II and I. The Prochlorales pcb genes are not related to higher plant LHCs. The chain is Divinyl chlorophyll a/b light-harvesting protein PcbA (pcbA) from Prochlorococcus marinus (strain SARG / CCMP1375 / SS120).